Here is a 472-residue protein sequence, read N- to C-terminus: Cysteine--tRNA ligase (472 aa).

Residue C27 coordinates Zn(2+). A 'HIGH' region motif is present at residues 29–39 (PTVYNLIHIGN). Zn(2+)-binding residues include C214, H239, and E243. The 'KMSKS' region signature appears at 271 to 275 (KMSKS). K274 contacts ATP.

Belongs to the class-I aminoacyl-tRNA synthetase family. As to quaternary structure, monomer. The cofactor is Zn(2+).

The protein localises to the cytoplasm. It carries out the reaction tRNA(Cys) + L-cysteine + ATP = L-cysteinyl-tRNA(Cys) + AMP + diphosphate. This is Cysteine--tRNA ligase from Lachnospira eligens (strain ATCC 27750 / DSM 3376 / VPI C15-48 / C15-B4) (Eubacterium eligens).